Here is a 224-residue protein sequence, read N- to C-terminus: Cerebellin-2 (224 aa).

The first 51 residues, 1–51 (MPAPGQGPRGPLLSMPGRRGALREPADFGSSLGAVLALLLLLLPACCPVRA), serve as a signal peptide directing secretion. N-linked (GlcNAc...) asparagine glycosylation is found at Asn53 and Asn110. Residues 88-224 (SGSAKVAFSA…TFSGFLVFPL (137 aa)) form the C1q domain.

In terms of assembly, homohexamer; disulfide-linked homotrimers. The trimers are assembled via the globular C1q domains. The trimers associate via N-terminal cysteine residues to form disulfide-linked hexamers. May form homooligomers or heterooligomers with CBLN1 and CBLN3 prior to secretion. Once secreted, does not interact with other CBLN family members. Interacts with GRID2, and more weakly with GRID1. Interacts with NRXN1 and NRXN2 long and short isoforms produced by alternative promoter usage. Weakly interacts with NRXN3 short isoform and not at all with NRXN3 long isoform. Expressed in various brain regions with higher levels in the olfactory bulb, cerebral cortex, certain thalamic and hypothalamic nuclei, superior and inferior colliculi and some brainstem nuclei. Highly expressed in the dorsal medial habenula.

Its subcellular location is the secreted. Its function is as follows. Acts as a synaptic organizer in specific subsets of neurons in the brain. Essential for long-term maintenance but not establishment of excitatory synapses. Functions as part of a trans-synaptic complex by binding to postsynaptic GRID1 and presynaptic neurexins. This interaction helps regulate the activity of NMDA and AMPA receptors at hippocampal synapses without affecting synapse formation. NRXN1B-CBLN2-GRID1 complex transduce presynaptic signals into postsynaptic NMDAR response. NRXN3B-CBLN2-GRID1 complex transduce presynaptic signals into postsynaptic AMPAR response. The sequence is that of Cerebellin-2 (Cbln2) from Mus musculus (Mouse).